The following is a 607-amino-acid chain: Elongation factor 4 (607 aa).

Residues 11–193 (EKIRNFSIIA…QIVEKVPAPQ (183 aa)) form the tr-type G domain. Residues 23-28 (DHGKST) and 140-143 (NKID) each bind GTP.

This sequence belongs to the TRAFAC class translation factor GTPase superfamily. Classic translation factor GTPase family. LepA subfamily.

The protein resides in the cell membrane. The catalysed reaction is GTP + H2O = GDP + phosphate + H(+). Its function is as follows. Required for accurate and efficient protein synthesis under certain stress conditions. May act as a fidelity factor of the translation reaction, by catalyzing a one-codon backward translocation of tRNAs on improperly translocated ribosomes. Back-translocation proceeds from a post-translocation (POST) complex to a pre-translocation (PRE) complex, thus giving elongation factor G a second chance to translocate the tRNAs correctly. Binds to ribosomes in a GTP-dependent manner. The sequence is that of Elongation factor 4 from Lactococcus lactis subsp. lactis (strain IL1403) (Streptococcus lactis).